A 127-amino-acid polypeptide reads, in one-letter code: Protein ApaG (127 aa).

Positions 3-127 constitute an ApaG domain; that stretch reads NNPSSKIEVA…FVLSVPRTLH (125 aa).

This is Protein ApaG from Xylella fastidiosa (strain M23).